The sequence spans 200 residues: Potassium-transporting ATPase KdpC subunit (200 aa).

The helical transmembrane segment at 9–31 (LVMLVALTALTGLVYPLAMTGVA) threads the bilayer. The tract at residues 68–97 (GRPSATTAPDPQDSSKTVPSPYNAANSMGA) is disordered. Over residues 71–96 (SATTAPDPQDSSKTVPSPYNAANSMG) the composition is skewed to polar residues.

This sequence belongs to the KdpC family. In terms of assembly, the system is composed of three essential subunits: KdpA, KdpB and KdpC.

The protein localises to the cell inner membrane. Functionally, part of the high-affinity ATP-driven potassium transport (or Kdp) system, which catalyzes the hydrolysis of ATP coupled with the electrogenic transport of potassium into the cytoplasm. This subunit acts as a catalytic chaperone that increases the ATP-binding affinity of the ATP-hydrolyzing subunit KdpB by the formation of a transient KdpB/KdpC/ATP ternary complex. This is Potassium-transporting ATPase KdpC subunit from Rhodopseudomonas palustris (strain BisA53).